The sequence spans 650 residues: ATP-binding cassette sub-family G member 3 (650 aa).

At 1 to 387 (MASNNDPTVI…KNFKGFPWVT (387 aa)) the chain is on the cytoplasmic side. Residues 37–279 (LSFHNISYQE…FRSAGYNYES (243 aa)) enclose the ABC transporter domain. One can recognise an ABC transmembrane type-2 domain in the interval 381–644 (KGFPWVTVIQ…TITYVQLLQV (264 aa)). A helical transmembrane segment spans residues 388-408 (VIQAIITVILATAVGTAFRVL). The Extracellular portion of the chain corresponds to 409–420 (KNDCIEVQMRAG). The chain crosses the membrane as a helical span at residues 421–441 (LLYLLTIFQCITSVSAGELFV). Residues 442 to 469 (IDRVRFLHEHTSGYYRVSSYFFGKLLAE) are Cytoplasmic-facing. Residues 470 to 490 (LIPRRLLPSTVFSLITYVIAG) form a helical membrane-spanning segment. Topologically, residues 491–498 (VKMSMKCF) are extracellular. A helical membrane pass occupies residues 499-519 (FTMICTIMVLAYSASSLPLSI). Residues 520 to 527 (GAGENAVA) lie on the Cytoplasmic side of the membrane. The chain crosses the membrane as a helical span at residues 528–548 (VPTLLVTIYFVFMLFFSGLSL). The Extracellular portion of the chain corresponds to 549–623 (YSGSFLPKLS…LSSWGFWENH (75 aa)). The chain crosses the membrane as a helical span at residues 624-644 (LALVCTMIILLTITYVQLLQV). Topologically, residues 645-648 (KNIR) are cytoplasmic.

It belongs to the ABC transporter superfamily. ABCG family. Eye pigment precursor importer (TC 3.A.1.204) subfamily. In terms of assembly, may dimerize with another subunit to form a functional transporter. In terms of tissue distribution, highest levels of expression in thymus and spleen. Detected in lung and small intestine.

It is found in the membrane. The protein is ATP-binding cassette sub-family G member 3 (Abcg3) of Mus musculus (Mouse).